A 515-amino-acid polypeptide reads, in one-letter code: Maturase K (515 aa).

It belongs to the intron maturase 2 family. MatK subfamily.

Its subcellular location is the plastid. It is found in the chloroplast. Its function is as follows. Usually encoded in the trnK tRNA gene intron. Probably assists in splicing its own and other chloroplast group II introns. The protein is Maturase K of Pinus roxburghii (Chir pine).